Reading from the N-terminus, the 359-residue chain is MFDVFGSVKGLLKLDSVCIDNNLFRLHYKATVIILIAFSLLVTSRQYIGDPIDCIVDEIPLAVMDTYCWIYSTFTIPNRLNGKIGLEVAHPGVGAHVAGKDEVKYHKYYQWVCFVLFFQAILFYIPRYLWKTWEGGRIKMLVLDLNSPVVNEQSKADRKKLLVDYFATNLHTQNFYAYRFFICEALNFVNVVGQIYFMDLFLDGEFTTYGSDVVRFTEMEPEERSDPMSRVFPKVTKCTFHKYGPSGSVQTFDGLCVLPLNIVNEKIYVFLWFWFVILSVLTGIGLVYRLATAMGPQMRMYLLRARSRLAPQDQIETISNKCQIGDWFVLYQLGKNIDPLIYKELVADLAKKLEGKEIV.

The Cytoplasmic segment spans residues 1-22 (MFDVFGSVKGLLKLDSVCIDNN). The chain crosses the membrane as a helical span at residues 23-43 (LFRLHYKATVIILIAFSLLVT). At 44 to 109 (SRQYIGDPID…KDEVKYHKYY (66 aa)) the chain is on the extracellular side. A helical membrane pass occupies residues 110-130 (QWVCFVLFFQAILFYIPRYLW). The Cytoplasmic portion of the chain corresponds to 131–180 (KTWEGGRIKMLVLDLNSPVVNEQSKADRKKLLVDYFATNLHTQNFYAYRF). The helical transmembrane segment at 181–201 (FICEALNFVNVVGQIYFMDLF) threads the bilayer. Over 202–266 (LDGEFTTYGS…VLPLNIVNEK (65 aa)) the chain is Extracellular. The chain crosses the membrane as a helical span at residues 267–287 (IYVFLWFWFVILSVLTGIGLV). Topologically, residues 288–359 (YRLATAMGPQ…AKKLEGKEIV (72 aa)) are cytoplasmic.

Belongs to the pannexin family. As to expression, widespread expression in embryo, in anterior and posterior row of neural precursors, midline precursors and in epithelial sheet of stomodeum.

It localises to the cell membrane. Its subcellular location is the cell junction. The protein resides in the gap junction. Structural components of the gap junctions. This is Innexin inx2 (inx2) from Schistocerca americana (American grasshopper).